The following is a 188-amino-acid chain: Probable manganese efflux pump MntP (188 aa).

6 helical membrane passes run 3 to 23 (FTAT…ASIG), 41 to 61 (LIFG…GILA), 66 to 86 (LEWN…RMII), 106 to 128 (WLLV…GLAF), 143 to 163 (ATLI…PMLG), and 168 to 188 (ILGG…HFHG).

This sequence belongs to the MntP (TC 9.B.29) family.

The protein localises to the cell inner membrane. Its function is as follows. Probably functions as a manganese efflux pump. The protein is Probable manganese efflux pump MntP of Salmonella typhimurium (strain LT2 / SGSC1412 / ATCC 700720).